A 284-amino-acid polypeptide reads, in one-letter code: MTEKPEIWTIRKVLDWTRGYLAEKGVENARLETEWLLSAALGLDRVGLYVNFDKPLNPEELAACRGLVARRAKREPLQYILGTQEFCGLDFVVTPSVLIPRHDTEVIVEEALRRAPHAAAVLDIGVGSGCIAVALAKQLPHAQVVGVEQSPGAIALAQRNAERHGARVTLFEGSLFEPLGDQRFDLIVSNPPYIPTADLEALQPEVREYEPRAALDGGSDGLDFYRLIVPAAPEYLNPGGWLMVELGIGQAETVLGMFSRTGFCDCFTAQDPNGIDRVVGGRIG.

Residues 125–129, glutamate 148, and asparagine 190 each bind S-adenosyl-L-methionine; that span reads GVGSG. 190–193 contacts substrate; that stretch reads NPPY.

It belongs to the protein N5-glutamine methyltransferase family. PrmC subfamily.

It catalyses the reaction L-glutaminyl-[peptide chain release factor] + S-adenosyl-L-methionine = N(5)-methyl-L-glutaminyl-[peptide chain release factor] + S-adenosyl-L-homocysteine + H(+). In terms of biological role, methylates the class 1 translation termination release factors RF1/PrfA and RF2/PrfB on the glutamine residue of the universally conserved GGQ motif. This chain is Release factor glutamine methyltransferase, found in Geobacter sulfurreducens (strain ATCC 51573 / DSM 12127 / PCA).